The following is a 355-amino-acid chain: Protein RecA (355 aa).

ATP is bound at residue 72-79 (GPESSGKT).

This sequence belongs to the RecA family.

The protein resides in the cytoplasm. In terms of biological role, can catalyze the hydrolysis of ATP in the presence of single-stranded DNA, the ATP-dependent uptake of single-stranded DNA by duplex DNA, and the ATP-dependent hybridization of homologous single-stranded DNAs. It interacts with LexA causing its activation and leading to its autocatalytic cleavage. This is Protein RecA from Wolbachia sp. subsp. Drosophila simulans (strain wRi).